The following is a 309-amino-acid chain: L-aminoadipate-semialdehyde dehydrogenase-phosphopantetheinyl transferase (309 aa).

CoA is bound by residues Arg47, 86 to 91, and 108 to 111; these read RTAKGK and NISH. Residues Asp129 and Glu181 each coordinate Mg(2+). 181-185 provides a ligand contact to CoA; it reads ESFIK. Ser258 is modified (phosphoserine).

This sequence belongs to the P-Pant transferase superfamily. AcpS family. In terms of assembly, monomer. Mg(2+) serves as cofactor.

The protein localises to the cytoplasm. It localises to the cytosol. The enzyme catalyses apo-[ACP] + CoA = holo-[ACP] + adenosine 3',5'-bisphosphate + H(+). It catalyses the reaction apo-[ACP] + acetyl-CoA = acetyl-[ACP] + adenosine 3',5'-bisphosphate + H(+). Functionally, catalyzes the post-translational modification of target proteins by phosphopantetheine. Can transfer the 4'-phosphopantetheine moiety from coenzyme A, regardless of whether the CoA is presented in the free thiol form or as an acetyl thioester, to a serine residue of a broad range of acceptors including the acyl carrier domain of FASN. The protein is L-aminoadipate-semialdehyde dehydrogenase-phosphopantetheinyl transferase (AASDHPPT) of Pongo abelii (Sumatran orangutan).